The following is a 57-amino-acid chain: Large ribosomal subunit protein bL32c (57 aa).

This sequence belongs to the bacterial ribosomal protein bL32 family.

It localises to the plastid. Its subcellular location is the chloroplast. The sequence is that of Large ribosomal subunit protein bL32c from Drimys granadensis.